We begin with the raw amino-acid sequence, 620 residues long: Translation initiation factor IF-2 (620 aa).

In terms of domain architecture, tr-type G spans 119–288 (ERPPIVTIMG…IILISELENL (170 aa)). The G1 stretch occupies residues 128–135 (GHVDHGKT). 128 to 135 (GHVDHGKT) contributes to the GTP binding site. The G2 stretch occupies residues 153 to 157 (GITQA). A G3 region spans residues 175 to 178 (DTPG). Residues 175-179 (DTPGH) and 229-232 (NKID) each bind GTP. Positions 229-232 (NKID) are G4. The tract at residues 265–267 (SAI) is G5.

Belongs to the TRAFAC class translation factor GTPase superfamily. Classic translation factor GTPase family. IF-2 subfamily.

Its subcellular location is the cytoplasm. One of the essential components for the initiation of protein synthesis. Protects formylmethionyl-tRNA from spontaneous hydrolysis and promotes its binding to the 30S ribosomal subunits. Also involved in the hydrolysis of GTP during the formation of the 70S ribosomal complex. This is Translation initiation factor IF-2 from Mycoplasma capricolum subsp. capricolum (strain California kid / ATCC 27343 / NCTC 10154).